Here is a 680-residue protein sequence, read N- to C-terminus: Trehalase (680 aa).

Residues methionine 1 to glycine 27 form a disordered region.

The protein belongs to the glycosyl hydrolase 15 family. As to quaternary structure, homomultimer. The cofactor is phosphate.

The enzyme catalyses alpha,alpha-trehalose + H2O = alpha-D-glucose + beta-D-glucose. Its pathway is glycan degradation; trehalose degradation; D-glucose from alpha,alpha-trehalose: step 1/1. Its function is as follows. Catalyzes the hydrolysis of alpha,alpha-trehalose into two molecules of D-glucose. This is Trehalase from Mycobacterium tuberculosis (strain ATCC 25618 / H37Rv).